The sequence spans 84 residues: uncharacterized protein (84 aa).

Basic residues-rich tracts occupy residues 1-15 (MPPH…HGHH) and 67-84 (HHGH…GHFF). Disordered regions lie at residues 1–22 (MPPH…TYTT) and 64–84 (TSHH…GHFF).

This is an uncharacterized protein from Dictyostelium discoideum (Social amoeba).